A 230-amino-acid chain; its full sequence is Putative 14-3-3-like protein GF14-H (230 aa).

Belongs to the 14-3-3 family.

Functionally, is associated with a DNA binding complex that binds to the G box, a well-characterized cis-acting DNA regulatory element found in plant genes. The polypeptide is Putative 14-3-3-like protein GF14-H (GF14H) (Oryza sativa subsp. japonica (Rice)).